We begin with the raw amino-acid sequence, 455 residues long: Bifunctional protein GlmU (455 aa).

Residues 1 to 226 (MGLSVVILAA…EFEILGVNDR (226 aa)) are pyrophosphorylase. UDP-N-acetyl-alpha-D-glucosamine contacts are provided by residues 8-11 (LAAG), Lys22, Gln73, 78-79 (GT), 99-101 (YGD), Gly136, Glu151, Asn166, and Asn224. Asp101 lines the Mg(2+) pocket. Position 224 (Asn224) interacts with Mg(2+). The linker stretch occupies residues 227–247 (TQLASLERVWQRNVAEKIMAK). An N-acetyltransferase region spans residues 248–455 (GVSIADPNRF…WQRSVKKTDK (208 aa)). Positions 330 and 348 each coordinate UDP-N-acetyl-alpha-D-glucosamine. The active-site Proton acceptor is the His360. Residues Tyr363 and Asn374 each coordinate UDP-N-acetyl-alpha-D-glucosamine. Acetyl-CoA-binding positions include Ala377, 383 to 384 (NY), Ser402, Ala420, and Arg437.

In the N-terminal section; belongs to the N-acetylglucosamine-1-phosphate uridyltransferase family. It in the C-terminal section; belongs to the transferase hexapeptide repeat family. Homotrimer. Mg(2+) serves as cofactor.

The protein localises to the cytoplasm. The catalysed reaction is alpha-D-glucosamine 1-phosphate + acetyl-CoA = N-acetyl-alpha-D-glucosamine 1-phosphate + CoA + H(+). It carries out the reaction N-acetyl-alpha-D-glucosamine 1-phosphate + UTP + H(+) = UDP-N-acetyl-alpha-D-glucosamine + diphosphate. Its pathway is nucleotide-sugar biosynthesis; UDP-N-acetyl-alpha-D-glucosamine biosynthesis; N-acetyl-alpha-D-glucosamine 1-phosphate from alpha-D-glucosamine 6-phosphate (route II): step 2/2. It participates in nucleotide-sugar biosynthesis; UDP-N-acetyl-alpha-D-glucosamine biosynthesis; UDP-N-acetyl-alpha-D-glucosamine from N-acetyl-alpha-D-glucosamine 1-phosphate: step 1/1. The protein operates within bacterial outer membrane biogenesis; LPS lipid A biosynthesis. In terms of biological role, catalyzes the last two sequential reactions in the de novo biosynthetic pathway for UDP-N-acetylglucosamine (UDP-GlcNAc). The C-terminal domain catalyzes the transfer of acetyl group from acetyl coenzyme A to glucosamine-1-phosphate (GlcN-1-P) to produce N-acetylglucosamine-1-phosphate (GlcNAc-1-P), which is converted into UDP-GlcNAc by the transfer of uridine 5-monophosphate (from uridine 5-triphosphate), a reaction catalyzed by the N-terminal domain. This is Bifunctional protein GlmU from Francisella tularensis subsp. tularensis (strain SCHU S4 / Schu 4).